A 361-amino-acid polypeptide reads, in one-letter code: Putative F-box protein At1g33010 (361 aa).

Residues 4–50 (GNTLDSIPTDLILEIFSRLSAKSVGRLRCLSKLWRKGEWFFFSSLQP) form the F-box domain. A disordered region spans residues 308–339 (SIRPTEQKHKPTSTETSMSRKDHQVRTIDQPQ).

The chain is Putative F-box protein At1g33010 from Arabidopsis thaliana (Mouse-ear cress).